Reading from the N-terminus, the 130-residue chain is Small ribosomal subunit protein uS9 (130 aa).

Belongs to the universal ribosomal protein uS9 family.

In Herminiimonas arsenicoxydans, this protein is Small ribosomal subunit protein uS9.